The sequence spans 315 residues: MRQTLCDGYLVIFALAQAVILLMLTPLFTGISRQIRARMHSRRGPGIWQDYRDIHKLFKRQEVAPTSSGLMFRLMPWVLISSMLVLAMALPLFITVSPFAGGGDLITLIYLLALFRFFFALSGLDTGSPFAGVGASRELTLGILVEPMLILSLLVLALIAGSTHIEMISNTLAMGWNSPLTTVLALLACGFACFIEMGKIPFDVAEAEQELQEGPLTEYSGAGLALAKWGLGLKQVVMASLFVALFLPFGRAQELSLACLLTSLVVTLLKVLLIFVLASIAENTLARGRFLLIHHVTWLGFSLAALAWVFWLTGL.

Residues 1 to 10 lie on the Periplasmic side of the membrane; the sequence is MRQTLCDGYL. The chain crosses the membrane as a helical span at residues 11–31; that stretch reads VIFALAQAVILLMLTPLFTGI. Residues 32-73 lie on the Cytoplasmic side of the membrane; the sequence is SRQIRARMHSRRGPGIWQDYRDIHKLFKRQEVAPTSSGLMFR. A helical membrane pass occupies residues 74-94; that stretch reads LMPWVLISSMLVLAMALPLFI. Topologically, residues 95-98 are periplasmic; it reads TVSP. The chain crosses the membrane as a helical span at residues 99–119; sequence FAGGGDLITLIYLLALFRFFF. Topologically, residues 120-140 are cytoplasmic; it reads ALSGLDTGSPFAGVGASRELT. Residues 141-161 traverse the membrane as a helical segment; sequence LGILVEPMLILSLLVLALIAG. At 162–181 the chain is on the periplasmic side; the sequence is STHIEMISNTLAMGWNSPLT. Residues 182-202 traverse the membrane as a helical segment; sequence TVLALLACGFACFIEMGKIPF. At 203–228 the chain is on the cytoplasmic side; the sequence is DVAEAEQELQEGPLTEYSGAGLALAK. A helical membrane pass occupies residues 229–249; the sequence is WGLGLKQVVMASLFVALFLPF. The Periplasmic portion of the chain corresponds to 250–256; that stretch reads GRAQELS. The chain crosses the membrane as a helical span at residues 257-277; that stretch reads LACLLTSLVVTLLKVLLIFVL. Residues 278-289 lie on the Cytoplasmic side of the membrane; sequence ASIAENTLARGR. Residues 290-310 form a helical membrane-spanning segment; sequence FLLIHHVTWLGFSLAALAWVF. At 311–315 the chain is on the periplasmic side; it reads WLTGL.

This sequence belongs to the complex I subunit 1 family.

It localises to the cell inner membrane. Its function is as follows. Possible component of hydrogenase 4. This is Hydrogenase-4 component C from Escherichia coli (strain K12).